The following is a 29-amino-acid chain: Cytochrome b6-f complex subunit 8 (29 aa).

The chain crosses the membrane as a helical span at residues 3 to 23 (IVGIAWAALMVVFTFSLSLVV).

Belongs to the PetN family. The 4 large subunits of the cytochrome b6-f complex are cytochrome b6, subunit IV (17 kDa polypeptide, PetD), cytochrome f and the Rieske protein, while the 4 small subunits are PetG, PetL, PetM and PetN. The complex functions as a dimer.

The protein localises to the plastid. The protein resides in the chloroplast thylakoid membrane. Functionally, component of the cytochrome b6-f complex, which mediates electron transfer between photosystem II (PSII) and photosystem I (PSI), cyclic electron flow around PSI, and state transitions. This is Cytochrome b6-f complex subunit 8 from Cryptomeria japonica (Japanese cedar).